The sequence spans 253 residues: HTH-type transcriptional regulator YdeO (253 aa).

The region spanning 137 to 233 (GKVRNIVNMK…GNSPKRVSKE (97 aa)) is the HTH araC/xylS-type domain. 2 DNA-binding regions (H-T-H motif) span residues 154-175 (KDIC…KQEQ) and 200-223 (VNKI…RKHF).

Induces the expression of gadE and mdtEF. Could also regulate the expression of other genes involved in acid resistance. This is HTH-type transcriptional regulator YdeO (ydeO) from Escherichia coli O6:H1 (strain CFT073 / ATCC 700928 / UPEC).